The chain runs to 161 residues: Protein-export protein SecB (161 aa).

Positions 141-161 are disordered; it reads KKQQETAGEQPDQPADTITRH.

This sequence belongs to the SecB family. Homotetramer, a dimer of dimers. One homotetramer interacts with 1 SecA dimer.

It localises to the cytoplasm. In terms of biological role, one of the proteins required for the normal export of preproteins out of the cell cytoplasm. It is a molecular chaperone that binds to a subset of precursor proteins, maintaining them in a translocation-competent state. It also specifically binds to its receptor SecA. The polypeptide is Protein-export protein SecB (Nitrosomonas europaea (strain ATCC 19718 / CIP 103999 / KCTC 2705 / NBRC 14298)).